The following is a 322-amino-acid chain: Transcription cofactor vestigial-like protein 2 (322 aa).

Residues 42 to 61 (ASPGSSASGSSSFSNPTPAS) are compositionally biased toward low complexity. Disordered stretches follow at residues 42-75 (ASPGSSASGSSSFSNPTPASVKEEEGSPEKERPP) and 248-322 (PGRL…PTLG). A compositionally biased stretch (basic and acidic residues) spans 62–75 (VKEEEGSPEKERPP). Low complexity-rich tracts occupy residues 248-258 (PGRLAPASAPA) and 270-283 (GEPAGSAWAAPGGP). Residues 312 to 322 (SAPPALYPTLG) show a composition bias toward pro residues.

Belongs to the vestigial family. In terms of assembly, interacts with TEFs. Binds to TEAD1/TEF1. As to expression, skeletal muscle specific.

The protein localises to the nucleus. May act as a specific coactivator for the mammalian TEFs. May play a role in the development of skeletal muscles. The polypeptide is Transcription cofactor vestigial-like protein 2 (Vgll2) (Mus musculus (Mouse)).